The following is a 677-amino-acid chain: Threonine--tRNA ligase (677 aa).

A TGS domain is found at 1 to 59 (MAQATISITVNGEAKEVEATTTGVELFAEDKNIIAVKINGENRDLYTPLNDGDTVDPIA). A catalytic region spans residues 255–561 (DHRKLGAEMD…LLEHYAGAFP (307 aa)). Residues Cys360, His411, and His538 each coordinate Zn(2+).

This sequence belongs to the class-II aminoacyl-tRNA synthetase family. As to quaternary structure, homodimer. The cofactor is Zn(2+).

It localises to the cytoplasm. It catalyses the reaction tRNA(Thr) + L-threonine + ATP = L-threonyl-tRNA(Thr) + AMP + diphosphate + H(+). In terms of biological role, catalyzes the attachment of threonine to tRNA(Thr) in a two-step reaction: L-threonine is first activated by ATP to form Thr-AMP and then transferred to the acceptor end of tRNA(Thr). Also edits incorrectly charged L-seryl-tRNA(Thr). The polypeptide is Threonine--tRNA ligase (Bifidobacterium longum (strain NCC 2705)).